We begin with the raw amino-acid sequence, 113 residues long: MHEITLCQSAFEIIDSQAKLNNAQKVKSVWMEISALSCVEVSALEFCFDIVCRDTIAQGCQLHIEVIPAKAWCWDCHQVVTVSTFNAGCPACGSQNLRVENDDAMRIKQIEIE.

Positions 2 and 3 each coordinate Ni(2+). The Zn(2+) site is built by Cys73, Cys76, Cys89, and Cys92.

Belongs to the HypA/HybF family. HybF subfamily.

Involved in the maturation of [NiFe] hydrogenases. Required for nickel insertion into the metal center of the hydrogenase. The sequence is that of Hydrogenase maturation factor HybF from Proteus vulgaris.